Here is a 435-residue protein sequence, read N- to C-terminus: D-amino acid dehydrogenase (435 aa).

3–17 is a binding site for FAD; that stretch reads VLILGSGVIGTTSAW.

The protein belongs to the DadA oxidoreductase family. FAD serves as cofactor.

The catalysed reaction is a D-alpha-amino acid + A + H2O = a 2-oxocarboxylate + AH2 + NH4(+). Its pathway is amino-acid degradation; D-alanine degradation; NH(3) and pyruvate from D-alanine: step 1/1. Oxidative deamination of D-amino acids. The polypeptide is D-amino acid dehydrogenase (Xylella fastidiosa (strain M23)).